The sequence spans 402 residues: Non-homologous end joining protein Ku (402 aa).

Positions 12–185 constitute a Ku domain; that stretch reads ISFGLVTIPV…VAALTGIAQP (174 aa). The disordered stretch occupies residues 261–402; that stretch reads QRAAGGATGG…GPDETAPGGP (142 aa). Low complexity-rich tracts occupy residues 299 to 308 and 332 to 343; these read GDPAASVPGV and VPGVPATAVPGT. Positions 344-358 are enriched in pro residues; it reads PGAPVPTAPGVPSAP. Residues 359 to 376 show a composition bias toward low complexity; the sequence is APGTSPTSVPGVQTAPNG.

Belongs to the prokaryotic Ku family. In terms of assembly, homodimer. Interacts with LigD.

Functionally, with LigD forms a non-homologous end joining (NHEJ) DNA repair enzyme, which repairs dsDNA breaks with reduced fidelity. Binds linear dsDNA with 5'- and 3'- overhangs but not closed circular dsDNA nor ssDNA. Recruits and stimulates the ligase activity of LigD. The chain is Non-homologous end joining protein Ku from Symbiobacterium thermophilum (strain DSM 24528 / JCM 14929 / IAM 14863 / T).